The following is a 147-amino-acid chain: Large ribosomal subunit protein bL9 (147 aa).

It belongs to the bacterial ribosomal protein bL9 family.

Its function is as follows. Binds to the 23S rRNA. The chain is Large ribosomal subunit protein bL9 from Mycoplasma capricolum subsp. capricolum (strain California kid / ATCC 27343 / NCTC 10154).